Reading from the N-terminus, the 168-residue chain is uncharacterized protein (168 aa).

2 helical membrane-spanning segments follow: residues 41 to 61 (LLPW…LFFI) and 133 to 153 (KFVI…FFVL).

The protein localises to the cell membrane. This is an uncharacterized protein from Thermotoga maritima (strain ATCC 43589 / DSM 3109 / JCM 10099 / NBRC 100826 / MSB8).